Consider the following 350-residue polypeptide: Transmembrane protein 185A (350 aa).

Helical transmembrane passes span 16–36 (LIYACLLLFSVLLALRLDGII), 41–61 (WAVFAPIWLWKLMVIVGASVG), 81–101 (FKAMLIAVGIHLLLLMFEVLV), 111–131 (FWLLVFMPLFFVSPVSVAACV), 177–197 (ILMSFLCLVVLYYIVWSVLFL), 211–231 (ITMALSWMTIVVPLLTFEILL), and 240–260 (AFSCIPIFVPLWLSLITLMAT). Residues 298 to 350 (DLHHEDNEETEETPVPEPPKIAPMFRKKARVVITQSPGKYALPPPKLNIEMPD) form a mediates interaction with MAP1B region.

Belongs to the TMEM185 family. In terms of assembly, interacts with MAP1B.

The protein localises to the cell projection. It localises to the dendrite. It is found in the membrane. The sequence is that of Transmembrane protein 185A (TMEM185A) from Pongo abelii (Sumatran orangutan).